Consider the following 200-residue polypeptide: Recombination protein RecR (200 aa).

A C4-type zinc finger spans residues Cys59 to Cys74. Residues Ser82–Pro177 enclose the Toprim domain.

Belongs to the RecR family.

Functionally, may play a role in DNA repair. It seems to be involved in an RecBC-independent recombinational process of DNA repair. It may act with RecF and RecO. The chain is Recombination protein RecR from Bifidobacterium longum (strain DJO10A).